We begin with the raw amino-acid sequence, 508 residues long: Photosystem II CP47 reaction center protein (508 aa).

The next 6 membrane-spanning stretches (helical) occupy residues 21 to 36 (SVHI…WAGS), 101 to 115 (IVFS…IWHW), 140 to 156 (GIHL…FGAF), 203 to 218 (IAAG…FHLS), 237 to 252 (VLSS…AFVV), and 457 to 472 (SFAL…HGAR).

Belongs to the PsbB/PsbC family. PsbB subfamily. As to quaternary structure, PSII is composed of 1 copy each of membrane proteins PsbA, PsbB, PsbC, PsbD, PsbE, PsbF, PsbH, PsbI, PsbJ, PsbK, PsbL, PsbM, PsbT, PsbX, PsbY, PsbZ, Psb30/Ycf12, at least 3 peripheral proteins of the oxygen-evolving complex and a large number of cofactors. It forms dimeric complexes. Requires Binds multiple chlorophylls. PSII binds additional chlorophylls, carotenoids and specific lipids. as cofactor.

The protein localises to the plastid. Its subcellular location is the chloroplast thylakoid membrane. In terms of biological role, one of the components of the core complex of photosystem II (PSII). It binds chlorophyll and helps catalyze the primary light-induced photochemical processes of PSII. PSII is a light-driven water:plastoquinone oxidoreductase, using light energy to abstract electrons from H(2)O, generating O(2) and a proton gradient subsequently used for ATP formation. This Manihot esculenta (Cassava) protein is Photosystem II CP47 reaction center protein.